Reading from the N-terminus, the 256-residue chain is MEEGGQQKGITAAFPPPPPFWKKFTPENLERLEKAKREAEPQALSRKWSPEALHALKLAPELRYLVPPELPKEGSYSLFGEAQSLSTQLPSLEEQGIEQLYPSSLTNETAGPSPDHAYYLLKISKSLLLNFLELVGILSINPEQYEPKIEDIRNLFINAHHLLNLYRPHQSRESLITMMEEQLEQAKEEIREMEQTKERVEIYLRELEAEGRNVSPNDEPVQTPESGPHNTKTQTSESQANGEQVLWKLLDKVEES.

Disordered regions lie at residues 1–20 (MEEGGQQKGITAAFPPPPPF) and 208–244 (EAEGRNVSPNDEPVQTPESGPHNTKTQTSESQANGEQ). Over residues 223 to 242 (TPESGPHNTKTQTSESQANG) the composition is skewed to polar residues.

Belongs to the Mediator complex subunit 7 family. As to quaternary structure, component of the Mediator complex.

The protein localises to the nucleus. Functionally, component of the Mediator complex, a coactivator involved in the regulated transcription of nearly all RNA polymerase II-dependent genes. Mediator functions as a bridge to convey information from gene-specific regulatory proteins to the basal RNA polymerase II transcription machinery. Mediator is recruited to promoters by direct interactions with regulatory proteins and serves as a scaffold for the assembly of a functional preinitiation complex with RNA polymerase II and the general transcription factors. The polypeptide is Mediator of RNA polymerase II transcription subunit 7 (MED7) (Coccidioides immitis (strain RS) (Valley fever fungus)).